The primary structure comprises 477 residues: Glycogen synthase (477 aa).

K15 is a binding site for ADP-alpha-D-glucose.

It belongs to the glycosyltransferase 1 family. Bacterial/plant glycogen synthase subfamily.

It carries out the reaction [(1-&gt;4)-alpha-D-glucosyl](n) + ADP-alpha-D-glucose = [(1-&gt;4)-alpha-D-glucosyl](n+1) + ADP + H(+). Its pathway is glycan biosynthesis; glycogen biosynthesis. Functionally, synthesizes alpha-1,4-glucan chains using ADP-glucose. The sequence is that of Glycogen synthase from Streptococcus pneumoniae serotype 2 (strain D39 / NCTC 7466).